Reading from the N-terminus, the 351-residue chain is Heat-inducible transcription repressor HrcA (351 aa).

The protein belongs to the HrcA family.

Functionally, negative regulator of class I heat shock genes (grpE-dnaK-dnaJ and groELS operons). Prevents heat-shock induction of these operons. The polypeptide is Heat-inducible transcription repressor HrcA (Beutenbergia cavernae (strain ATCC BAA-8 / DSM 12333 / CCUG 43141 / JCM 11478 / NBRC 16432 / NCIMB 13614 / HKI 0122)).